The sequence spans 729 residues: Ribosomal RNA large subunit methyltransferase K/L (729 aa).

Residues 47 to 158 (TFYRLCLWSR…KNELTLALDL (112 aa)) enclose the THUMP domain.

It belongs to the methyltransferase superfamily. RlmKL family.

Its subcellular location is the cytoplasm. The catalysed reaction is guanosine(2445) in 23S rRNA + S-adenosyl-L-methionine = N(2)-methylguanosine(2445) in 23S rRNA + S-adenosyl-L-homocysteine + H(+). It catalyses the reaction guanosine(2069) in 23S rRNA + S-adenosyl-L-methionine = N(2)-methylguanosine(2069) in 23S rRNA + S-adenosyl-L-homocysteine + H(+). Its function is as follows. Specifically methylates the guanine in position 2445 (m2G2445) and the guanine in position 2069 (m7G2069) of 23S rRNA. The protein is Ribosomal RNA large subunit methyltransferase K/L of Dichelobacter nodosus (strain VCS1703A).